A 260-amino-acid polypeptide reads, in one-letter code: NAD-capped RNA hydrolase NudC (260 aa).

A substrate-binding site is contributed by R74. C103, C106, C121, and C124 together coordinate Zn(2+). Y129 is a substrate binding site. Residues 130–253 form the Nudix hydrolase domain; that stretch reads PRIFPCIIVA…TIARALIEQT (124 aa). Residues A163, E179, and E183 each coordinate a divalent metal cation. The Nudix box motif lies at 164 to 185; it reads GFLEAGETLEDCVAREVHEETG. 197–204 lines the substrate pocket; sequence QPWAFPSS. E224 provides a ligand contact to a divalent metal cation. A246 is a binding site for substrate.

Belongs to the Nudix hydrolase family. NudC subfamily. In terms of assembly, homodimer. Mg(2+) serves as cofactor. The cofactor is Mn(2+). Zn(2+) is required as a cofactor.

The catalysed reaction is a 5'-end NAD(+)-phospho-ribonucleoside in mRNA + H2O = a 5'-end phospho-adenosine-phospho-ribonucleoside in mRNA + beta-nicotinamide D-ribonucleotide + 2 H(+). It carries out the reaction NAD(+) + H2O = beta-nicotinamide D-ribonucleotide + AMP + 2 H(+). It catalyses the reaction NADH + H2O = reduced beta-nicotinamide D-ribonucleotide + AMP + 2 H(+). In terms of biological role, mRNA decapping enzyme that specifically removes the nicotinamide adenine dinucleotide (NAD) cap from a subset of mRNAs by hydrolyzing the diphosphate linkage to produce nicotinamide mononucleotide (NMN) and 5' monophosphate mRNA. The NAD-cap is present at the 5'-end of some mRNAs and stabilizes RNA against 5'-processing. Has preference for mRNAs with a 5'-end purine. Catalyzes the hydrolysis of a broad range of dinucleotide pyrophosphates. The protein is NAD-capped RNA hydrolase NudC of Vibrio parahaemolyticus serotype O3:K6 (strain RIMD 2210633).